The sequence spans 701 residues: Polyribonucleotide nucleotidyltransferase (701 aa).

The Mg(2+) site is built by aspartate 485 and aspartate 491. The region spanning 552 to 611 (PRIIKIRINPEKIRDVIGKGGAVIRALTEETGTTIDITDDGTVMIACVNAEGGELAKKRI) is the KH domain. The S1 motif domain occupies 621–689 (GRVYDGTVLK…DKGRLRLSMK (69 aa)).

This sequence belongs to the polyribonucleotide nucleotidyltransferase family. Requires Mg(2+) as cofactor.

It is found in the cytoplasm. It catalyses the reaction RNA(n+1) + phosphate = RNA(n) + a ribonucleoside 5'-diphosphate. Its function is as follows. Involved in mRNA degradation. Catalyzes the phosphorolysis of single-stranded polyribonucleotides processively in the 3'- to 5'-direction. This chain is Polyribonucleotide nucleotidyltransferase, found in Nitrosospira multiformis (strain ATCC 25196 / NCIMB 11849 / C 71).